Consider the following 551-residue polypeptide: MPSARLQQQFIRLWQCCEGKSQETTLNELAALLSCSRRHMRTLLNTMQDRGWLTWEAEVGRGKRSRLTFLYTGLALQQQRAEDLLEQDRIDQLVQLVGDKATVRQMLVSHLGRSFRQGRHILRVLYYRPLRNLLPGSALRRSETHIARQIFSSLTRINEENGELEADIAHHWQQISPLHWRFFLRPGVHFHHGRELEMDDVIFSLKRINTLPLYSHIADIVSPTPWTLDIHLTQPDRWLPLLLGQVPAMILPREWETLSNFASHPIGTGPYAVIRNSTNQLKIQAFDDFFGYRALIDEVNVWVLPEIADEPAGGLMLKGPQGEEKEIESRLEEGCYYLLFDSRTHRGANQQVRDWVSYVLSPTNLVYFAEEQYQQLWFPAYGLLPRWHHARIIKSEKPAGLESLTLTFYQDHSEHRVIAGIMQQILASHQVTLEIKEISYDQWHEGEIESDIWLNSANFTLPLDFSLFAHLCEVPLLQHCIPIDWQADAARWRNGEMNLANWCQQLVASKAMVPLIHHWLIIQGQRSMRGLRMNTLGWFDFKSAWFAPPDP.

Positions 1–116 constitute an HTH marR-type domain; the sequence is MPSARLQQQF…LVSHLGRSFR (116 aa). A DNA-binding region (H-T-H motif) is located at residues 26–49; it reads LNELAALLSCSRRHMRTLLNTMQD. The interval 163–492 is solute-binding; the sequence is ELEADIAHHW…IDWQADAARW (330 aa).

Its function is as follows. Activates the small RNA gene sgrS under glucose-phosphate stress conditions as well as yfdZ. Represses its own transcription under both stress and non-stress conditions. Might act as a sensor of the intracellular accumulation of phosphoglucose by binding these molecules in its C-terminal solute-binding domain. The chain is HTH-type transcriptional regulator SgrR from Escherichia coli O6:K15:H31 (strain 536 / UPEC).